A 67-amino-acid chain; its full sequence is Protein DsrB (67 aa).

This sequence belongs to the DsrB family.

In Pectobacterium carotovorum subsp. carotovorum (strain PC1), this protein is Protein DsrB.